The following is a 269-amino-acid chain: Glutamate racemase (269 aa).

Substrate-binding positions include 14–15 (DS) and 46–47 (YS). Cysteine 78 functions as the Proton donor/acceptor in the catalytic mechanism. Residue 79–80 (NT) participates in substrate binding. Cysteine 189 acts as the Proton donor/acceptor in catalysis. 190 to 191 (TH) is a binding site for substrate.

It belongs to the aspartate/glutamate racemases family.

The catalysed reaction is L-glutamate = D-glutamate. It functions in the pathway cell wall biogenesis; peptidoglycan biosynthesis. Functionally, provides the (R)-glutamate required for cell wall biosynthesis. The polypeptide is Glutamate racemase (Haemophilus influenzae (strain PittGG)).